Here is a 393-residue protein sequence, read N- to C-terminus: Venom metalloproteinase BumaMPs1 (393 aa).

The first 15 residues, 1–15, serve as a signal peptide directing secretion; that stretch reads MFVHLLVLLFAAVEA. N-linked (GlcNAc...) asparagine glycosylation is present at Asn158. One can recognise a Peptidase M12B domain in the interval 167 to 377; the sequence is KCVKIEYVFV…RVEELITRRK (211 aa). His323 serves as a coordination point for Zn(2+). Glu324 is an active-site residue. The Zn(2+) site is built by His327 and His333. The disintegrin-like domain stretch occupies residues 378-393; the sequence is INHCIVETCDGKRKRN.

Belongs to the venom metalloproteinase (M12B) family. Requires Zn(2+) as cofactor. Contains several disulfide bonds. In terms of tissue distribution, expressed by the venom gland.

The protein localises to the secreted. Metalloprotease. The polypeptide is Venom metalloproteinase BumaMPs1 (Olivierus martensii (Manchurian scorpion)).